The following is a 487-amino-acid chain: Glutamyl-tRNA(Gln) amidotransferase subunit A (487 aa).

Active-site charge relay system residues include Lys74 and Ser149. Catalysis depends on Ser173, which acts as the Acyl-ester intermediate.

This sequence belongs to the amidase family. GatA subfamily. Heterotrimer of A, B and C subunits.

The catalysed reaction is L-glutamyl-tRNA(Gln) + L-glutamine + ATP + H2O = L-glutaminyl-tRNA(Gln) + L-glutamate + ADP + phosphate + H(+). In terms of biological role, allows the formation of correctly charged Gln-tRNA(Gln) through the transamidation of misacylated Glu-tRNA(Gln) in organisms which lack glutaminyl-tRNA synthetase. The reaction takes place in the presence of glutamine and ATP through an activated gamma-phospho-Glu-tRNA(Gln). In Synechococcus sp. (strain CC9311), this protein is Glutamyl-tRNA(Gln) amidotransferase subunit A.